The sequence spans 1885 residues: Fatty acid synthase subunit alpha (1885 aa).

The segment covering P92–E107 has biased composition (basic and acidic residues). The tract at residues P92 to S140 is disordered. Residues S108–P126 show a composition bias toward low complexity. The 76-residue stretch at V146 to Q221 folds into the Carrier domain. S181 carries the O-(pantetheine 4'-phosphoryl)serine modification. In terms of domain architecture, Ketosynthase family 3 (KS3) spans I1121–H1661. Active-site for beta-ketoacyl synthase activity residues include C1304, H1546, and H1587. Mg(2+)-binding residues include D1771, V1772, and E1773. Residues D1771–E1773, Y1797, S1807, E1816–S1826, R1840–N1843, and I1870–H1872 each bind acetyl-CoA. Residues S1871 and H1872 each contribute to the Mg(2+) site.

The protein belongs to the thiolase-like superfamily. Fungal fatty acid synthetase subunit alpha family. As to quaternary structure, [Alpha(6)beta(6)] hexamers of two multifunctional subunits (alpha and beta).

It carries out the reaction acetyl-CoA + n malonyl-CoA + 2n NADPH + 4n H(+) = a long-chain-acyl-CoA + n CoA + n CO2 + 2n NADP(+).. The enzyme catalyses a fatty acyl-[ACP] + malonyl-[ACP] + H(+) = a 3-oxoacyl-[ACP] + holo-[ACP] + CO2. It catalyses the reaction a (3R)-hydroxyacyl-[ACP] + NADP(+) = a 3-oxoacyl-[ACP] + NADPH + H(+). In terms of biological role, fatty acid synthetase catalyzes the formation of long-chain fatty acids from acetyl-CoA, malonyl-CoA and NADPH. The alpha subunit contains domains for: acyl carrier protein, 3-oxoacyl-[acyl-carrier-protein] reductase, and 3-oxoacyl-[acyl-carrier-protein] synthase. This is Fatty acid synthase subunit alpha (FAS2) from Candida albicans (Yeast).